The sequence spans 241 residues: Gamma-interferon-inducible lysosomal thiol reductase-like protein (241 aa).

Residues 1-18 form the signal peptide; sequence MLFKSLLLLSVYAVTCYG. N-linked (GlcNAc...) asparagine glycosylation is found at N105 and N152. The helical transmembrane segment at 218 to 235 threads the bilayer; the sequence is STGSAISSLGMIVTVVAV.

This sequence belongs to the GILT family. In terms of tissue distribution, salivary gland (at protein level). Low-level expression in midgut (at protein level). Expressed in head and leg tissues. Ovary. Fat body. As to expression, (Microbial infection) Detected with Plasmodium berghei sporozoites isolated from the saliva of infected Anopheles gambiae mosquitoes (at protein level).

Its subcellular location is the membrane. Required for normal development of ovary and testis. In terms of biological role, (Microbial infection) Interacts with the surface of Plasmodium berghei sporozoites. Reduces P.berghei sporozoite cell traversal activity and transmission. Limits the motility of P.berghei sporozoites. Decreases the levels of host liver infection by P.berghei sporozoites. Does not affect P.berghei sporozoite viability. Indirectly promotes P.berghei survival in mosquitoes by influencing ovarian development and the subsequent production of 20-hydroxyecdysone and vitellogenin, which, in turn, modulates TEP1-dependent parasite killing. Promotes P.berghei infection in mosquitoes, most likely impacting the oocyst stage of parasite development. Functionally, (Microbial infection) Promotes Plasmodium falciparum survival in mosquitoes. In Anopheles gambiae (African malaria mosquito), this protein is Gamma-interferon-inducible lysosomal thiol reductase-like protein.